The chain runs to 305 residues: tRNA dimethylallyltransferase (305 aa).

8 to 15 (GPTASGKT) contributes to the ATP binding site. Substrate is bound at residue 10 to 15 (TASGKT). The interaction with substrate tRNA stretch occupies residues 33-36 (DSQQ).

The protein belongs to the IPP transferase family. In terms of assembly, monomer. Requires Mg(2+) as cofactor.

It carries out the reaction adenosine(37) in tRNA + dimethylallyl diphosphate = N(6)-dimethylallyladenosine(37) in tRNA + diphosphate. Functionally, catalyzes the transfer of a dimethylallyl group onto the adenine at position 37 in tRNAs that read codons beginning with uridine, leading to the formation of N6-(dimethylallyl)adenosine (i(6)A). The protein is tRNA dimethylallyltransferase of Anaeromyxobacter dehalogenans (strain 2CP-1 / ATCC BAA-258).